A 112-amino-acid polypeptide reads, in one-letter code: Protein SMALL AUXIN UP-REGULATED RNA 10 (112 aa).

It belongs to the ARG7 family. As to expression, confined to the veins and petioles of rosette leaves and cauline leaves, and specifically expressed at the abaxial side of inflorescence branche; relocates to both the adaxial (Ad) and abaxial (Ab) sides of the branch in reduced red:far-red (R:FR) light, during shade. Also present in flowers.

It localises to the cell membrane. Provide a mechanistic link between auxin and plasma membrane H(+)-ATPases (PM H(+)-ATPases, e.g. AHA1 and AHA2), and triggers PM H(+)-ATPases activity by promoting phosphorylation of their C-terminal autoinhibitory domain as a result of PP2C-D subfamily of type 2C phosphatases inhibition, thus leading to the acidification of the apoplast and the facilitation of solutes and water uptake to drive cell expansion. Triggers plant growth probably by promoting cell elongation. Regulates branch angles and bending. The polypeptide is Protein SMALL AUXIN UP-REGULATED RNA 10 (Arabidopsis thaliana (Mouse-ear cress)).